The primary structure comprises 562 residues: Protein wntless (562 aa).

The Cytoplasmic segment spans residues 1–15 (MSGTILENLSGRKLS). A helical transmembrane segment spans residues 16 to 36 (ILVSSLMLCQVVCFLMGGLFA). Residues 37–239 (PVPAGHQTVL…AIHQNGGFTQ (203 aa)) are Lumenal-facing. N58 and N103 each carry an N-linked (GlcNAc...) asparagine glycan. The helical transmembrane segment at 240–260 (VWLVLKTLLFPFVIGIMMWFW) threads the bilayer. Residues 261–275 (RRVHILQRSPALLEY) lie on the Cytoplasmic side of the membrane. The chain crosses the membrane as a helical span at residues 276–296 (MLFYLGGALSFLNLPLELLTL). Over 297 to 311 (GVEMPYMLLLSDVRQ) the chain is Lumenal. The chain crosses the membrane as a helical span at residues 312 to 332 (GIFYAMLLSFWLVFAGEHMLI). Residues 333–344 (QDSPSKSTIRSR) are Cytoplasmic-facing. A helical membrane pass occupies residues 345–365 (YWKHLSAVVVGCISLFVFDIC). Residues 366–390 (ERGVQMRNPFYSIWTTPLGAKVAMS) lie on the Lumenal side of the membrane. A helical transmembrane segment spans residues 391 to 411 (FIVLAGVSAAIYFLFLCFMVW). Residues 412–441 (KVFKDIGDKRTSLPSMSQARRLHYEGLIYR) lie on the Cytoplasmic side of the membrane. Residues 442–462 (FKFLMLATLLCAGLTVAGFIM) form a helical membrane-spanning segment. Residues 463 to 482 (GQMAEGHWKWNENIEIQLTS) lie on the Lumenal side of the membrane. The chain crosses the membrane as a helical span at residues 483–503 (AFLTGVYGMWNIYIFALIILY). Residues 504-562 (APSHKQWPTMRHSDETTQSNENIVASAASEEIEFSNLPSDSNPSEISSLTSFTRKVAFD) are Cytoplasmic-facing.

This sequence belongs to the wntless family. In terms of assembly, interacts with wg; in the Golgi. Interacts with Vps35, a component of the retromer complex; wls stability is regulated by Vps35.

It localises to the presynaptic cell membrane. Its subcellular location is the postsynaptic cell membrane. The protein localises to the cell membrane. The protein resides in the endoplasmic reticulum membrane. It is found in the endosome membrane. It localises to the golgi apparatus membrane. Its function is as follows. A segment polarity gene required for wingless (wg)-dependent patterning processes, acting in both wg-sending cells and wg-target cells. In non-neuronal cells wls directs wg secretion. The wls traffic loop encompasses the Golgi, the cell surface, an endocytic compartment and a retrograde route leading back to the Golgi, and involves clathrin-mediated endocytosis and the retromer complex (a conserved protein complex consisting of Vps35 and Vps26). In neuronal cells (the larval motorneuron NMJ), the wg signal moves across the synapse via the release of wls-containing exosome-like vesicles. Postsynaptic wls is required for the trafficking of fz2 through the fz2-interacting protein Grip. This Drosophila grimshawi (Hawaiian fruit fly) protein is Protein wntless.